Consider the following 186-residue polypeptide: 3-hydroxyanthranilate 3,4-dioxygenase (186 aa).

Arg-44 contributes to the O2 binding site. Positions 48, 54, and 96 each coordinate Fe cation. Glu-54 contacts substrate. Substrate contacts are provided by Arg-100 and Glu-110. Cys-125, Cys-130, Cys-164, and Cys-167 together coordinate a divalent metal cation.

The protein belongs to the 3-HAO family. Requires Fe(2+) as cofactor.

Its subcellular location is the cytoplasm. The enzyme catalyses 3-hydroxyanthranilate + O2 = (2Z,4Z)-2-amino-3-carboxymuconate 6-semialdehyde. It participates in cofactor biosynthesis; NAD(+) biosynthesis; quinolinate from L-kynurenine: step 3/3. Its function is as follows. Catalyzes the oxidative ring opening of 3-hydroxyanthranilate to 2-amino-3-carboxymuconate semialdehyde, which spontaneously cyclizes to quinolinate. This Chaetomium globosum (strain ATCC 6205 / CBS 148.51 / DSM 1962 / NBRC 6347 / NRRL 1970) (Soil fungus) protein is 3-hydroxyanthranilate 3,4-dioxygenase.